The chain runs to 423 residues: 3-phosphoshikimate 1-carboxyvinyltransferase (423 aa).

3 residues coordinate 3-phosphoshikimate: K21, S22, and R26. K21 contacts phosphoenolpyruvate. The phosphoenolpyruvate site is built by G92 and R120. 5 residues coordinate 3-phosphoshikimate: S166, Q168, S194, D310, and K337. Phosphoenolpyruvate is bound at residue Q168. The active-site Proton acceptor is D310. Residues R341, R384, and K409 each contribute to the phosphoenolpyruvate site.

It belongs to the EPSP synthase family. In terms of assembly, monomer.

Its subcellular location is the cytoplasm. The enzyme catalyses 3-phosphoshikimate + phosphoenolpyruvate = 5-O-(1-carboxyvinyl)-3-phosphoshikimate + phosphate. Its pathway is metabolic intermediate biosynthesis; chorismate biosynthesis; chorismate from D-erythrose 4-phosphate and phosphoenolpyruvate: step 6/7. Catalyzes the transfer of the enolpyruvyl moiety of phosphoenolpyruvate (PEP) to the 5-hydroxyl of shikimate-3-phosphate (S3P) to produce enolpyruvyl shikimate-3-phosphate and inorganic phosphate. This Syntrophobacter fumaroxidans (strain DSM 10017 / MPOB) protein is 3-phosphoshikimate 1-carboxyvinyltransferase.